A 1203-amino-acid chain; its full sequence is DNA-directed RNA polymerase subunit beta' (1203 aa).

Cys-60, Cys-62, Cys-75, and Cys-78 together coordinate Zn(2+). Mg(2+)-binding residues include Asp-449, Asp-451, and Asp-453. Zn(2+)-binding residues include Cys-818, Cys-892, Cys-899, and Cys-902.

It belongs to the RNA polymerase beta' chain family. The RNAP catalytic core consists of 2 alpha, 1 beta, 1 beta' and 1 omega subunit. When a sigma factor is associated with the core the holoenzyme is formed, which can initiate transcription. Requires Mg(2+) as cofactor. Zn(2+) serves as cofactor.

It catalyses the reaction RNA(n) + a ribonucleoside 5'-triphosphate = RNA(n+1) + diphosphate. DNA-dependent RNA polymerase catalyzes the transcription of DNA into RNA using the four ribonucleoside triphosphates as substrates. The chain is DNA-directed RNA polymerase subunit beta' from Bacillus cereus (strain ATCC 10987 / NRS 248).